Reading from the N-terminus, the 427-residue chain is Trigger factor (427 aa).

Positions 163–248 (GDIAVIDFKG…IKSIKVKELP (86 aa)) constitute a PPIase FKBP-type domain.

It belongs to the FKBP-type PPIase family. Tig subfamily.

It is found in the cytoplasm. It carries out the reaction [protein]-peptidylproline (omega=180) = [protein]-peptidylproline (omega=0). In terms of biological role, involved in protein export. Acts as a chaperone by maintaining the newly synthesized protein in an open conformation. Functions as a peptidyl-prolyl cis-trans isomerase. The chain is Trigger factor from Clostridium beijerinckii (strain ATCC 51743 / NCIMB 8052) (Clostridium acetobutylicum).